Here is a 59-residue protein sequence, read N- to C-terminus: Large ribosomal subunit protein uL30 (59 aa).

Belongs to the universal ribosomal protein uL30 family. In terms of assembly, part of the 50S ribosomal subunit.

In Escherichia coli (strain UTI89 / UPEC), this protein is Large ribosomal subunit protein uL30.